Consider the following 314-residue polypeptide: Formate-nitrite transporter (314 aa).

The Cytoplasmic portion of the chain corresponds to 1–47 (MQKSTSKYVIDPISIKTNCSSEESYIRCVEYGKGKAHYRNLILLAKA). The chain crosses the membrane as a helical span at residues 48–68 (ILAGVFVGVCAHASGIAGGLF). Over 69 to 77 (YYHKLREYV) the chain is Extracellular. A helical membrane pass occupies residues 78–98 (GISMSAFVYGFTFPIAFLCII). The Cytoplasmic segment spans residues 99–128 (CTGSDLFTGNTLAVTTALLQKKLGLLCYMR). A helical membrane pass occupies residues 129–149 (VMCISLVGNYIGAVAFAFFVS). The Extracellular portion of the chain corresponds to 150–185 (YGSGAFSINTDTSKNHIFQFLNDIAIKKVSHSFIEC). The helical transmembrane segment at 186 to 206 (ICLAIGCNIFVCLAVYFVLSI) threads the bilayer. At 207-211 (KDGSG) the chain is on the cytoplasmic side. The helical transmembrane segment at 212–232 (LVFSVFFAVYAFAIAGYEHII) threads the bilayer. At 233–260 (ANIYTLNLALMISNDISFTQVYFKNLLP) the chain is on the extracellular side. A helical transmembrane segment spans residues 261 to 281 (TLIGNYIAGGLVLAFPLFFIY). Over 282–314 (RSCYYDYDKMNDELNTVVLKTLSLELQNESNHI) the chain is Cytoplasmic.

The protein belongs to the FNT transporter (TC 1.A.16) family. As to quaternary structure, homopentamer.

The protein localises to the cell membrane. The protein resides in the vacuole membrane. The enzyme catalyses (S)-lactate(in) + H(+)(in) = (S)-lactate(out) + H(+)(out). The catalysed reaction is formate(in) + H(+)(in) = formate(out) + H(+)(out). It catalyses the reaction pyruvate(out) + H(+)(out) = pyruvate(in) + H(+)(in). It carries out the reaction acetate(out) + H(+)(out) = acetate(in) + H(+)(in). Inhibited by the Malaria Box compound MMV007839 and its derivatives BH296 and BH267.meta. Its function is as follows. Monocarboxylate-proton symporter that mediates the efflux of the waste product lactate in the intraerythrocytic parasites; active in acidic-to-neutral pH range. Transports L-lactate. This Plasmodium malariae protein is Formate-nitrite transporter.